The chain runs to 439 residues: Xylose isomerase (439 aa).

Catalysis depends on residues histidine 101 and aspartate 104. Mg(2+)-binding residues include glutamate 232, glutamate 268, histidine 271, aspartate 296, aspartate 307, aspartate 309, and aspartate 339.

It belongs to the xylose isomerase family. As to quaternary structure, homotetramer. Requires Mg(2+) as cofactor.

The protein resides in the cytoplasm. The enzyme catalyses alpha-D-xylose = alpha-D-xylulofuranose. The protein is Xylose isomerase (xylA) of Thermoanaerobacterium saccharolyticum.